The primary structure comprises 1199 residues: Chromosome partition protein Smc (1199 aa).

ATP is bound at residue 32-39; sequence PNGSGKSN. Residues 192 to 528 are a coiled coil; it reads GVAEFDEKSE…NARIKTLKDM (337 aa). The 113-residue stretch at 546–658 folds into the SMC hinge domain; the sequence is PGVVDIAGNL…VDNLENAKKL (113 aa). Positions 691–1051 form a coiled coil; sequence IKVDIDMKKL…YLQLISEVQK (361 aa).

Belongs to the SMC family. In terms of assembly, homodimer.

Its subcellular location is the cytoplasm. In terms of biological role, required for chromosome condensation and partitioning. The chain is Chromosome partition protein Smc from Methanococcus voltae.